Consider the following 531-residue polypeptide: MNILDVMKIPAFENANLIAGKAGGEREVQHVNMMDAPDIVDFLHKNELLVTTAYHLKDHPHQLSELIRQMAKRGCAGLGIKTKRYLEDIPKEIIELADSYAFPIIELPEHIRLGDIVNATLSHILDMRSNELQQAIYAHKKFTNHIMSGKGLQSLLKKVSDILQLPVLLLDQHAKMLSASHQISVETEKLKGTLNTVSGPFFTCFSTISDQKTYSVLPIYNHEKNCGYLLIPDMVQAGDKGLILTIEQAANVISFELLKENALKQFSRRARNEFFNNFIERTFSSDDEIKNRAKEFKLRWDQKYMCIAGKLDRNDESISFTENQLASDSVFEFLEGELSAFPFPPHFFMKGNVGIILIEATDSWSEMHASVISFLEQFQTQVSAQFKRTVSFGISNICQKLIDVPDAFTEASDALQSGHLSRSTAFIQVYHAKDVPELLRLLPVEDLKKFYNSTLQSLAEKQQEDQSLLHTLSVYLETHCQISETAKRLYVHRNTVIYRLEKCEELLGKSLKDPETTMRLRLALRMQRLIS.

The protein belongs to the CdaR family.

In terms of biological role, activates the expression of pucFG, pucH, pucI, pucJKLM and guaD, while it represses pucABCDE and its own expression. This Bacillus subtilis (strain 168) protein is Purine catabolism regulatory protein (pucR).